Here is a 195-residue protein sequence, read N- to C-terminus: MSYIPYVVEQTGRGERSYDIYSRLLKDRIIMLSGEVNDQVASSIVAQLLFLEAQDPDKDIYFYINSPGGVITSGLSMFDTMNYIKPDIVTICIGQAASMGAFLLASGTKGKRYALPHARIMIHQPSGGAQGQSTDIQIQAQEIQRLKDTLNEIMAEKTGKTAKRIEKDTERDNFMSAKEAVEYGLIDKVLTKSFT.

The active-site Nucleophile is the S98. The active site involves H123.

This sequence belongs to the peptidase S14 family. Fourteen ClpP subunits assemble into 2 heptameric rings which stack back to back to give a disk-like structure with a central cavity, resembling the structure of eukaryotic proteasomes.

Its subcellular location is the cytoplasm. The catalysed reaction is Hydrolysis of proteins to small peptides in the presence of ATP and magnesium. alpha-casein is the usual test substrate. In the absence of ATP, only oligopeptides shorter than five residues are hydrolyzed (such as succinyl-Leu-Tyr-|-NHMec, and Leu-Tyr-Leu-|-Tyr-Trp, in which cleavage of the -Tyr-|-Leu- and -Tyr-|-Trp bonds also occurs).. In terms of biological role, cleaves peptides in various proteins in a process that requires ATP hydrolysis. Has a chymotrypsin-like activity. Plays a major role in the degradation of misfolded proteins. The chain is ATP-dependent Clp protease proteolytic subunit from Sulfurovum sp. (strain NBC37-1).